The following is a 582-amino-acid chain: Isopropyl malate synthase AMT7 (582 aa).

The Pyruvate carboxyltransferase domain occupies 61–341 (PVLFSTDLRD…EPGIDLSRLD (281 aa)).

Belongs to the alpha-IPM synthase/homocitrate synthase family. LeuA type 2 subfamily.

The enzyme catalyses 3-methyl-2-oxobutanoate + acetyl-CoA + H2O = (2S)-2-isopropylmalate + CoA + H(+). It participates in mycotoxin biosynthesis. In terms of biological role, isopropyl malate synthase; part of the gene clusters that mediate the biosynthesis of AM-toxins, host-selective toxins (HSTs) causing Alternaria blotch on apple, a worldwide distributed disease. AM-toxins are cyclic depsipeptides containing the 3 residues 2-hydroxy-isovaleric acid (2-HIV), dehydroalanine, L-alanine which are common for all 3 AM-toxins I to III. The fourth precursor is L-alpha-amino-methoxyphenyl-valeric acid (L-Amv) for AM-toxin I, L-alpha-amino-phenyl-valeric acid (L-Apv) for AM-toxin II, and L-alpha-amino-hydroxyphenyl-valeric acid (L-Ahv) for AM-toxin III. AM-toxins have two target sites for affecting susceptible apple cells; they cause invagination of the plasma membrane and electrolyte loss and chloroplast disorganization. The non-ribosomal peptide synthetase AMT1 contains 4 catalytic modules and is responsible for activation of each residue in AM-toxin. The aldo-keto reductase AMT2 catalyzes the conversion of 2-keto-isovaleric acid (2-KIV) to 2-hydroxy-isovaleric acid (2-HIV), one of the precursor residues incorporated by AMT1 during AM-toxin biosynthesis, by reduction of its ketone to an alcohol. The cytochrome P450 monooxygenase AMT3 and the thioesterase AMT4 are also important for AM-toxin production, but their exact function within the AM-toxin biosynthesis are not known yet. Up to 21 proteins (including AMT1 to AMT4) are predicted to be involved in AM-toxin biosynthesis since their expression ishighly up-regulated in AM-toxin-producing cultures. In Alternaria alternata (Alternaria rot fungus), this protein is Isopropyl malate synthase AMT7.